The chain runs to 156 residues: ATP synthase subunit b (156 aa).

Residues L7 to P27 traverse the membrane as a helical segment.

Belongs to the ATPase B chain family. In terms of assembly, F-type ATPases have 2 components, F(1) - the catalytic core - and F(0) - the membrane proton channel. F(1) has five subunits: alpha(3), beta(3), gamma(1), delta(1), epsilon(1). F(0) has three main subunits: a(1), b(2) and c(10-14). The alpha and beta chains form an alternating ring which encloses part of the gamma chain. F(1) is attached to F(0) by a central stalk formed by the gamma and epsilon chains, while a peripheral stalk is formed by the delta and b chains.

The protein resides in the cell inner membrane. In terms of biological role, f(1)F(0) ATP synthase produces ATP from ADP in the presence of a proton or sodium gradient. F-type ATPases consist of two structural domains, F(1) containing the extramembraneous catalytic core and F(0) containing the membrane proton channel, linked together by a central stalk and a peripheral stalk. During catalysis, ATP synthesis in the catalytic domain of F(1) is coupled via a rotary mechanism of the central stalk subunits to proton translocation. Component of the F(0) channel, it forms part of the peripheral stalk, linking F(1) to F(0). The sequence is that of ATP synthase subunit b from Paraburkholderia phymatum (strain DSM 17167 / CIP 108236 / LMG 21445 / STM815) (Burkholderia phymatum).